The sequence spans 239 residues: Transcriptional regulatory protein DcuR (239 aa).

Residues 3–121 form the Response regulatory domain; it reads NVLIIDDDAM…RFEEALTGWR (119 aa). At D56 the chain carries 4-aspartylphosphate. Positions 181 to 200 form a DNA-binding region, H-T-H motif; it reads TDELANEVNISRVSCRKYLI.

Phosphorylated and activated by DcuS.

It localises to the cytoplasm. In terms of biological role, member of the two-component regulatory system DcuR/DcuS. Involved in the C4-dicarboxylate-stimulated regulation of the genes encoding the anaerobic fumarate respiratory system (frdABCD; nuoAN; dcuB; dcuC; sdhCDAB; etc.). Weakly regulates the aerobic C4-dicarboxylate transporter dctA. The polypeptide is Transcriptional regulatory protein DcuR (dcuR) (Escherichia coli O157:H7).